A 194-amino-acid chain; its full sequence is Histone H1.0 (194 aa).

Residue Met1 is modified to N-acetylmethionine. A disordered region spans residues 1–26 (MTENSTSTPAAKPKRAKAAKKSTDHP). Thr2 is modified (N-acetylthreonine; in Histone H1.0, N-terminally processed). Residues 24-97 (DHPKYSDMIV…GASGSFRLAK (74 aa)) form the H15 domain. A Citrulline modification is found at Arg42. The segment at 86-194 (GVGASGSFRL…SSAKRASKKK (109 aa)) is disordered. Ser104 carries the post-translational modification ADP-ribosylserine. Residues 105–194 (VAFKKTKKEV…SSAKRASKKK (90 aa)) are compositionally biased toward basic residues.

It belongs to the histone H1/H5 family. In terms of processing, ADP-ribosylated on Ser-104 in response to DNA damage.

It localises to the nucleus. The protein localises to the chromosome. Functionally, histones H1 are necessary for the condensation of nucleosome chains into higher-order structures. The histones H1.0 are found in cells that are in terminal stages of differentiation or that have low rates of cell division. The polypeptide is Histone H1.0 (H1-0) (Rattus norvegicus (Rat)).